Consider the following 315-residue polypeptide: Olfactory receptor 5P59 (315 aa).

Residues 1–28 (MAFLQDGNHTAVTEFILLGLTDDPVLRV) lie on the Extracellular side of the membrane. N8 carries N-linked (GlcNAc...) asparagine glycosylation. A helical membrane pass occupies residues 29–49 (VLFTIILCIYLVTVFGNLSTI). Residues 50–57 (LLIRVSSQ) are Cytoplasmic-facing. A helical membrane pass occupies residues 58 to 78 (LHHPMYFFLSHLASVDIGISS). Residues 79-102 (SVTPSMLVNFLLERSTISYLGCGI) lie on the Extracellular side of the membrane. A disulfide bond links C100 and C193. A helical transmembrane segment spans residues 103 to 123 (QLGSADFIASVECFLLAAMAY). Residues 124–136 (DRFMAVCNPLLYS) lie on the Cytoplasmic side of the membrane. The helical transmembrane segment at 137-157 (TKMSTQVCVQLVVGSYIGGFL) threads the bilayer. The Extracellular segment spans residues 158 to 200 (NASLIVTVYFFSFLFCGPNRIDHFFCDFAPLAELSCSDVSVSV). Residues 201–221 (LIISFSAGSVTMITVFVIVIS) form a helical membrane-spanning segment. Topologically, residues 222 to 241 (YSYILITILKMHSTEGRHKA) are cytoplasmic. The chain crosses the membrane as a helical span at residues 242–262 (FSTCTSHLTAVTLYYGTITFI). Residues 263–275 (YVMPKSSFSTDQN) lie on the Extracellular side of the membrane. The chain crosses the membrane as a helical span at residues 276–296 (KVVSVFYMVMIPMLNPLIYSL). Residues 297–315 (SNNEIKGALKRQLGMKTLS) are Cytoplasmic-facing.

This sequence belongs to the G-protein coupled receptor 1 family.

It localises to the cell membrane. Functionally, potential odorant receptor. The polypeptide is Olfactory receptor 5P59 (Mus musculus (Mouse)).